We begin with the raw amino-acid sequence, 247 residues long: Chymase (247 aa).

A signal peptide spans 1 to 19 (MLLLPLPLLLLFLCSRAEA). Residues 20-21 (GE) constitute a propeptide, activation peptide. The Peptidase S1 domain occupies 22-245 (IIGGTECKPH…YRPWINKILQ (224 aa)). C51 and C67 are oxidised to a cystine. The active-site Charge relay system is the H66. 2 N-linked (GlcNAc...) asparagine glycosylation sites follow: N80 and N103. Residue D110 is the Charge relay system of the active site. 2 disulfides stabilise this stretch: C144-C209 and C175-C188. S203 serves as the catalytic Charge relay system.

The protein belongs to the peptidase S1 family. Granzyme subfamily.

Its subcellular location is the secreted. It localises to the cytoplasmic granule. The catalysed reaction is Preferential cleavage: Phe-|-Xaa &gt; Tyr-|-Xaa &gt; Trp-|-Xaa &gt; Leu-|-Xaa.. In terms of biological role, major secreted protease of mast cells with suspected roles in vasoactive peptide generation, extracellular matrix degradation, and regulation of gland secretion. The polypeptide is Chymase (CMA1) (Papio hamadryas (Hamadryas baboon)).